We begin with the raw amino-acid sequence, 145 residues long: Deoxyuridine 5'-triphosphate nucleotidohydrolase (145 aa).

Residues 63–65 (RSG), Asn76, 80–82 (TID), and Lys90 contribute to the substrate site.

It belongs to the dUTPase family. Requires Mg(2+) as cofactor.

It catalyses the reaction dUTP + H2O = dUMP + diphosphate + H(+). It functions in the pathway pyrimidine metabolism; dUMP biosynthesis; dUMP from dCTP (dUTP route): step 2/2. Functionally, this enzyme is involved in nucleotide metabolism: it produces dUMP, the immediate precursor of thymidine nucleotides and it decreases the intracellular concentration of dUTP so that uracil cannot be incorporated into DNA. The protein is Deoxyuridine 5'-triphosphate nucleotidohydrolase of Clostridium acetobutylicum (strain ATCC 824 / DSM 792 / JCM 1419 / IAM 19013 / LMG 5710 / NBRC 13948 / NRRL B-527 / VKM B-1787 / 2291 / W).